The sequence spans 307 residues: Mitochondrial brown fat uncoupling protein 1 (307 aa).

Topologically, residues 1 to 10 (MVSQTTSEVQ) are mitochondrial intermembrane. Residues 11 to 32 (PTMGVKIFSAGVAACLADIITF) form a helical membrane-spanning segment. Solcar repeat units follow at residues 11-102 (PTMG…VQEY), 111-201 (PTLV…MKGA), and 210-295 (DDVP…LKKE). At 33-73 (PLDTAKVRLQIQGEGQTSSTIRYKGVLGTITTLAKTEGLPK) the chain is on the mitochondrial matrix side. Lys-56 is a binding site for fatty acid 16:0. The helical transmembrane segment at 74 to 96 (LYSGLPAGIQRQISFASLRIGLY) threads the bilayer. Over 97–116 (DTVQEYFSSGKETPPTLVNR) the chain is Mitochondrial intermembrane. Residues 117-133 (ISAGLMTGGVAVFIGQP) form a helical membrane-spanning segment. Over 134–178 (TEVVKVRLQAQSHLHGIKPRYTGTYNAYRIIATTESLSTLWKGTT) the chain is Mitochondrial matrix. Residues 179-195 (PNLLRNVIINCTELVTY) form a helical membrane-spanning segment. Topologically, residues 196–212 (DLMKGALVNNQILADDV) are mitochondrial intermembrane. A helical transmembrane segment spans residues 213-232 (PCHLLSALVAGFCTTFLASP). Topologically, residues 233–266 (ADVVKTRFINSLPGQYPSVPSCAMTMFTKEGPTA) are mitochondrial matrix. Cys-254 is subject to Cysteine sulfenic acid (-SOH). A helical transmembrane segment spans residues 267–289 (FFKGFVPSFLRLASWNVIMFVCF). Residue Lys-269 participates in fatty acid 16:0 binding. The Mitochondrial intermembrane portion of the chain corresponds to 290-307 (EQLKKELMKSRQTVDCTT).

Belongs to the mitochondrial carrier (TC 2.A.29) family. Most probably functions as a monomer. Binds one purine nucleotide per monomer. However, has also been suggested to function as a homodimer or a homotetramer. Tightly associates with cardiolipin in the mitochondrion inner membrane; may stabilize and regulate its activity. May undergo sulfenylation upon cold exposure. May increase the sensitivity of UCP1 thermogenic function to the activation by noradrenaline probably through structural effects. Post-translationally, may undergo ubiquitin-mediated proteasomal degradation. In terms of tissue distribution, brown adipose tissue.

It localises to the mitochondrion inner membrane. The enzyme catalyses H(+)(in) = H(+)(out). Has no constitutive proton transporter activity and has to be activated by long-chain fatty acids/LCFAs. Inhibited by purine nucleotides. Both purine nucleotides and LCFAs bind the cytosolic side of the transporter and directly compete to activate or inhibit it. Activated by noradrenaline and reactive oxygen species. Despite lacking canonical translational encoding for selenocysteine, a small pool of the protein has been observed to selectively incorporate selenocysteine at 'Cys-254'. Selenocysteine-modified protein is highly sensitive to redox modification and may constitute a pool of protein highly sensitive to activation by elevated levels of reactive oxygen species (ROS). Functionally, mitochondrial protein responsible for thermogenic respiration, a specialized capacity of brown adipose tissue and beige fat that participates in non-shivering adaptive thermogenesis to temperature and diet variations and more generally to the regulation of energy balance. Functions as a long-chain fatty acid/LCFA and proton symporter, simultaneously transporting one LCFA and one proton through the inner mitochondrial membrane. However, LCFAs remaining associated with the transporter via their hydrophobic tails, it results in an apparent transport of protons activated by LCFAs. Thereby, dissipates the mitochondrial proton gradient and converts the energy of substrate oxydation into heat instead of ATP. Regulates the production of reactive oxygen species/ROS by mitochondria. In Phodopus sungorus (Striped hairy-footed hamster), this protein is Mitochondrial brown fat uncoupling protein 1.